A 136-amino-acid chain; its full sequence is Histone H3 (136 aa).

The tract at residues 1–43 (MARTKQTARKSTGGKAPRKQLASKAARKSAPSTGGVKKPHRYK) is disordered. The residue at position 5 (lysine 5) is an N6,N6,N6-trimethyllysine; alternate. Residue lysine 5 is modified to N6,N6-dimethyllysine; alternate. An N6-methyllysine; alternate mark is found at lysine 5 and lysine 10. The residue at position 10 (lysine 10) is an N6-acetyllysine; alternate. Position 11 is a phosphoserine (serine 11). Lysine 15 carries the N6,N6-dimethyllysine; alternate modification. 5 positions are modified to N6-acetyllysine; alternate: lysine 15, lysine 19, lysine 24, lysine 28, and lysine 37. Residues lysine 19, lysine 24, lysine 28, and lysine 37 each carry the N6-methyllysine; alternate modification. N6,N6,N6-trimethyllysine; alternate occurs at positions 28 and 37. N6,N6-dimethyllysine; alternate occurs at positions 28 and 37. N6-acetyllysine occurs at positions 57 and 65. Lysine 80 carries the N6,N6,N6-trimethyllysine; alternate modification. Residue lysine 80 is modified to N6,N6-dimethyllysine; alternate. Lysine 80 bears the N6-methyllysine; alternate mark.

The protein belongs to the histone H3 family. In terms of assembly, the nucleosome is a histone octamer containing two molecules each of H2A, H2B, H3 and H4 assembled in one H3-H4 heterotetramer and two H2A-H2B heterodimers. The octamer wraps approximately 147 bp of DNA. In terms of processing, phosphorylated to form H3S10ph. H3S10ph promotes subsequent H3K14ac formation and is required for transcriptional activation through TBP recruitment to the promoters. Mono-, di- and trimethylated by the COMPASS complex to form H3K4me1/2/3. H3K4me activates gene expression by regulating transcription elongation and plays a role in telomere length maintenance. H3K4me enrichment correlates with transcription levels, and occurs in a 5' to 3' gradient with H3K4me3 enrichment at the 5'-end of genes, shifting to H3K4me2 and then H3K4me1. Methylated by SET2 to form H3K36me. H3K36me represses gene expression. Methylated by DOT1 to form H3K79me. H3K79me is required for association of SIR proteins with telomeric regions and for telomeric silencing. The COMPASS-mediated formation of H3K4me2/3 and the DOT1-mediated formation of H3K79me require H2BK123ub1. Post-translationally, acetylation of histone H3 leads to transcriptional activation. H3K14ac formation by GCN5 is promoted by H3S10ph. H3K14ac can also be formed by ESA1. H3K56ac formation occurs predominantly in newly synthesized H3 molecules during G1, S and G2/M of the cell cycle and may be involved in DNA repair.

It localises to the nucleus. It is found in the chromosome. Functionally, core component of nucleosome. Nucleosomes wrap and compact DNA into chromatin, limiting DNA accessibility to the cellular machineries which require DNA as a template. Histones thereby play a central role in transcription regulation, DNA repair, DNA replication and chromosomal stability. DNA accessibility is regulated via a complex set of post-translational modifications of histones, also called histone code, and nucleosome remodeling. This Phaeosphaeria nodorum (strain SN15 / ATCC MYA-4574 / FGSC 10173) (Glume blotch fungus) protein is Histone H3 (HHT1).